A 247-amino-acid polypeptide reads, in one-letter code: Sugar fermentation stimulation protein homolog (247 aa).

This sequence belongs to the SfsA family.

The protein is Sugar fermentation stimulation protein homolog of Aeromonas salmonicida (strain A449).